The sequence spans 315 residues: Intradiol ring-cleavage dioxygenase prcA (315 aa).

Fe cation is bound by residues tyrosine 166, tyrosine 200, histidine 224, and histidine 226. Positions 287-315 (KKHHPNPNSAPPVSSFERFNKASKTQEKL) are disordered. The span at 304-315 (RFNKASKTQEKL) shows a compositional bias: basic and acidic residues.

This sequence belongs to the intradiol ring-cleavage dioxygenase family. Homodimer. The cofactor is Fe(3+).

The catalysed reaction is 3,4-dihydroxybenzoate + O2 = 3-carboxy-cis,cis-muconate + 2 H(+). Intradiol ring-cleavage dioxygenase; part of the benzoic acid degradation pathway also known as the protocatechuic acid pathway. Benzoic acid debradation begins with the conversion of benzoic acid into 4-hydroxybenzoic acid through hydroxylation by the benzoate-4-monooxygenase bphA, and its partner NADPH-cytochrome P450 reductase cprA which act as a mediator in electron donation from NADPH. 4-Hydroxybenzoic acid is then converted into 3,4-dihydroxybenzoic acid (also called protocatechuic acid) by the p-hydroxybenzoate-m-hydroxylase phhA. Protocatechuic acid is converted into 3-carboxy-cis,cis-muconic acid by the intradiol ring-cleavage dioxygenase prcA, which is further metabolized through the 3-oxoadipate pathway to finally enter the tricarboxylic acid cycle (TCA). The protein is Intradiol ring-cleavage dioxygenase prcA of Aspergillus niger (strain ATCC MYA-4892 / CBS 513.88 / FGSC A1513).